Consider the following 368-residue polypeptide: 2-aminoethylphosphonate--pyruvate transaminase (368 aa).

Lysine 192 bears the N6-(pyridoxal phosphate)lysine mark.

The protein belongs to the class-V pyridoxal-phosphate-dependent aminotransferase family. PhnW subfamily. As to quaternary structure, homodimer. It depends on pyridoxal 5'-phosphate as a cofactor.

It catalyses the reaction (2-aminoethyl)phosphonate + pyruvate = phosphonoacetaldehyde + L-alanine. In terms of biological role, involved in phosphonate degradation. The chain is 2-aminoethylphosphonate--pyruvate transaminase from Pseudomonas putida (strain GB-1).